The chain runs to 689 residues: Methionine--tRNA ligase (689 aa).

The short motif at 15 to 25 is the 'HIGH' region element; it reads PYANGPIHLGH. Positions 146, 149, 159, and 162 each coordinate Zn(2+). A 'KMSKS' region motif is present at residues 332–336; sequence KMSKS. Position 335 (Lys335) interacts with ATP. The 102-residue stretch at 588–689 folds into the tRNA-binding domain; sequence DFAKIDLRIA…EGAQPGMRVK (102 aa).

This sequence belongs to the class-I aminoacyl-tRNA synthetase family. MetG type 1 subfamily. In terms of assembly, homodimer. Zn(2+) serves as cofactor.

It is found in the cytoplasm. It carries out the reaction tRNA(Met) + L-methionine + ATP = L-methionyl-tRNA(Met) + AMP + diphosphate. Its function is as follows. Is required not only for elongation of protein synthesis but also for the initiation of all mRNA translation through initiator tRNA(fMet) aminoacylation. The polypeptide is Methionine--tRNA ligase (Shewanella baltica (strain OS223)).